Consider the following 162-residue polypeptide: Heat shock protein beta-6 (162 aa).

Residues M1–G72 form an involved in stabilization of the HSPB1:HSBP6 heterodimer region. S16 carries the post-translational modification Phosphoserine. A sHSP domain is found at R56–K162. Deamidated glutamine is present on Q66. Position 157 is a phosphoserine (S157).

This sequence belongs to the small heat shock protein (HSP20) family. In terms of assembly, homodimer. Small heat shock proteins form high molecular mass oligomers containing variable number of monomers; these oligomers display a very flexible quaternary structure easily exchanging their subunits. Heterooligomer with HSPB1; formed through oligomerization of HSPB1:HSBP6 dimers; subunit exchange leads to formation of at least two different heterooligomeric complexes, differing in variable quantities of HSPB1 and HSPB6 homodimers in addition to HSPB1:HSPB6 heterodimers. Heterooligomer with CRYAB; large heterooligomers consist of CRYAB homodimers and HSPB5:HSPB6 heterodimers but lacking HSPB6 homodimers. Interacts with BAG3. Interacts (phosphorylated) with YWHAZ. Interacts with PDE4A and PDE4D; required for maintenance of the non-phosphorylated state of HSPB6 under basal conditions. Interacts with KDR. Interacts with PRKD1. In terms of processing, phosphorylated at Ser-16 by PKA and probably PKD1K; required to protect cardiomyocytes from apoptosis.

It localises to the cytoplasm. The protein localises to the nucleus. It is found in the secreted. Small heat shock protein which functions as a molecular chaperone probably maintaining denatured proteins in a folding-competent state. Seems to have versatile functions in various biological processes. Plays a role in regulating muscle function such as smooth muscle vasorelaxation and cardiac myocyte contractility. May regulate myocardial angiogenesis implicating KDR. Overexpression mediates cardioprotection and angiogenesis after induced damage. Stabilizes monomeric YWHAZ thereby supporting YWHAZ chaperone-like activity. This chain is Heat shock protein beta-6 (Hspb6), found in Mus musculus (Mouse).